We begin with the raw amino-acid sequence, 173 residues long: MKYGIVLFPSKCIQDFANSYRKRYDSHYALIPPHITLKYPFEANEGQLKEMTKELHRIAAETPPIPIKVTKFSSFYPTSNIIYLKVEQNDVLKHLHEQLHSGLFAGKPEFAFVPHITIGRDLPGAEYADVYSQVKLQHVHFEETIDRFHLLYQLENGSWTVYDTFVVGGKETV.

Histidine 34 acts as the Proton donor in catalysis. Short sequence motifs (HXTX) lie at residues 34 to 37 and 115 to 118; these read HITL and HITI. Residue histidine 115 is the Proton acceptor of the active site.

This sequence belongs to the 2H phosphoesterase superfamily. YjcG family.

This is Putative phosphoesterase GTNG_0743 from Geobacillus thermodenitrificans (strain NG80-2).